The sequence spans 134 residues: Large ribosomal subunit protein bL12 (134 aa).

Belongs to the bacterial ribosomal protein bL12 family. In terms of assembly, homodimer. Part of the ribosomal stalk of the 50S ribosomal subunit. Forms a multimeric L10(L12)X complex, where L10 forms an elongated spine to which 2 to 4 L12 dimers bind in a sequential fashion. Binds GTP-bound translation factors.

Forms part of the ribosomal stalk which helps the ribosome interact with GTP-bound translation factors. Is thus essential for accurate translation. The sequence is that of Large ribosomal subunit protein bL12 from Anaplasma phagocytophilum (strain HZ).